The chain runs to 101 residues: Helix-loop-helix protein 17 (101 aa).

The tract at residues 14 to 27 (GVRLSINLRERCRM) is basic motif. Residues 14–68 (GVRLSINLRERCRMHDLNEALDDLRAVIPYAHGGSVRKLSKIATLLLAKNHIIMQ) form the bHLH domain. The interval 28 to 68 (HDLNEALDDLRAVIPYAHGGSVRKLSKIATLLLAKNHIIMQ) is helix-loop-helix motif.

As to expression, expressed in neuronal tissues of the head, including sheath cells of the cephalic sensilla (CEPsh) glia.

The protein localises to the nucleus. Its function is as follows. Probable transcription factor that regulates the expression of dopamine receptors dop-1, dop-2 and dop-3 and thus dopamine-dependent behaviors. May act redundantly with hlh-31 and hlh-32 to regulate ventral CEPsh glia functions. May play a role in chemotactic responses in larvae. The protein is Helix-loop-helix protein 17 of Caenorhabditis elegans.